The primary structure comprises 207 residues: Imidazole glycerol phosphate synthase subunit HisH (207 aa).

The region spanning 1–206 (MMIVIGYDAG…KEYVYENTAR (206 aa)) is the Glutamine amidotransferase type-1 domain. Cys-79 acts as the Nucleophile in catalysis. Residues His-181 and Glu-183 contribute to the active site.

As to quaternary structure, heterodimer of HisH and HisF.

Its subcellular location is the cytoplasm. It catalyses the reaction 5-[(5-phospho-1-deoxy-D-ribulos-1-ylimino)methylamino]-1-(5-phospho-beta-D-ribosyl)imidazole-4-carboxamide + L-glutamine = D-erythro-1-(imidazol-4-yl)glycerol 3-phosphate + 5-amino-1-(5-phospho-beta-D-ribosyl)imidazole-4-carboxamide + L-glutamate + H(+). It carries out the reaction L-glutamine + H2O = L-glutamate + NH4(+). It participates in amino-acid biosynthesis; L-histidine biosynthesis; L-histidine from 5-phospho-alpha-D-ribose 1-diphosphate: step 5/9. In terms of biological role, IGPS catalyzes the conversion of PRFAR and glutamine to IGP, AICAR and glutamate. The HisH subunit catalyzes the hydrolysis of glutamine to glutamate and ammonia as part of the synthesis of IGP and AICAR. The resulting ammonia molecule is channeled to the active site of HisF. The protein is Imidazole glycerol phosphate synthase subunit HisH of Streptococcus gordonii (strain Challis / ATCC 35105 / BCRC 15272 / CH1 / DL1 / V288).